A 147-amino-acid chain; its full sequence is Small ribosomal subunit protein uS5 (147 aa).

One can recognise an S5 DRBM domain in the interval 9–72 (FEEVVVNISR…DNAFKNITTV (64 aa)).

This sequence belongs to the universal ribosomal protein uS5 family. Part of the 30S ribosomal subunit. Contacts proteins S4 and S8.

Its function is as follows. With S4 and S12 plays an important role in translational accuracy. In terms of biological role, located at the back of the 30S subunit body where it stabilizes the conformation of the head with respect to the body. The chain is Small ribosomal subunit protein uS5 from Nitratiruptor sp. (strain SB155-2).